A 149-amino-acid chain; its full sequence is Calmodulin (149 aa).

A2 carries the N-acetylalanine modification. EF-hand domains follow at residues 8–43 (EQISEFKEAFSLFDKDGDGTITTKELGTVMRSLGQN), 44–79 (PTEAELQDMINEVDADGNGTIDFPEFLTMMARKMRD), 81–116 (DSEEEIKEAFKVFDKDGNGYISAAELRHVMTNLGEK), and 117–149 (LTDNEVDEMIREADIDGDGQINYEEFVKMMLSK). Residues D21, D23, D25, T27, E32, D57, D59, N61, T63, E68, D94, D96, N98, Y100, E105, D130, D132, D134, Q136, and E141 each coordinate Ca(2+).

The protein belongs to the calmodulin family. In terms of processing, trimethylation of Lys-116 observed in other calmodulins is absent here.

In terms of biological role, calmodulin mediates the control of a large number of enzymes, ion channels and other proteins by Ca(2+). Among the enzymes to be stimulated by the calmodulin-Ca(2+) complex are a number of protein kinases and phosphatases. This chain is Calmodulin (CMD1), found in Pleurotus cornucopiae (Cornucopia mushroom).